The following is a 161-amino-acid chain: Anaerobic nitrite reductase HB2 (161 aa).

One can recognise a Globin domain in the interval 5 to 154; that stretch reads VFTEKQEALV…LALAIKAEMK (150 aa). A Homodimerization motif is present at residues 38 to 42; sequence EIAPA. S48, K62, H66, and H101 together coordinate heme b. The short motif at 108 to 120 is the Homodimerization element; sequence DPHFEVVKEALVR.

Belongs to the plant globin family. In terms of assembly, homodimer. Requires heme b as cofactor.

Its subcellular location is the cytoplasm. The protein localises to the nucleus. The enzyme catalyses Fe(III)-heme b-[protein] + nitric oxide + H2O = Fe(II)-heme b-[protein] + nitrite + 2 H(+). Its function is as follows. Phytoglobin that reduces nitrite to nitric oxide (NO) under anoxic conditions (e.g. during flooding or in waterlogged soil). May not function as an oxygen storage or transport protein. Has an unusually high affinity for O(2) through an hexacoordinate heme iron because of a very low dissociation constant. This Brassica napus (Rape) protein is Anaerobic nitrite reductase HB2.